The following is a 172-amino-acid chain: Small ribosomal subunit protein uS5 (172 aa).

One can recognise an S5 DRBM domain in the interval 16-79; the sequence is LKEKLVHINR…EDGKKNVIKV (64 aa).

The protein belongs to the universal ribosomal protein uS5 family. Part of the 30S ribosomal subunit. Contacts proteins S4 and S8.

Its function is as follows. With S4 and S12 plays an important role in translational accuracy. In terms of biological role, located at the back of the 30S subunit body where it stabilizes the conformation of the head with respect to the body. The polypeptide is Small ribosomal subunit protein uS5 (Pelodictyon phaeoclathratiforme (strain DSM 5477 / BU-1)).